We begin with the raw amino-acid sequence, 107 residues long: Cytochrome c2 (107 aa).

Q1 is subject to Pyrrolidone carboxylic acid. Residues C13, C16, H17, and M79 each coordinate heme c.

Belongs to the cytochrome c family. Post-translationally, binds 1 heme c group covalently per subunit.

It is found in the periplasm. Functionally, cytochrome c2 is found mainly in purple, non-sulfur, photosynthetic bacteria where it functions as the electron donor to the oxidized bacteriochlorophyll in the photophosphorylation pathway. However, it may also have a role in the respiratory chain and is found in some non-photosynthetic bacteria. The protein is Cytochrome c2 of Rhodoplanes tepidamans (Rhodoplanes cryptolactis).